We begin with the raw amino-acid sequence, 413 residues long: MDLSLLLPKRSWEISGGADKISRVAMSLKNIVKNKYKAIGRRGRSHIAPEGSSVSSSLSTNEGLNQSIWVDLPPELLLDIIQRIESEQSLWPGRRDVVACASVCKSWREMTKEVVKVPELSGLITFPISLRQPGPRDAPIQCFIKRERATGIYRLYLGLSPALSGDKSKLLLSAKRVRRATGAEFVVSLSGNDFSRSSSNYIGKLRSNFLGTKFTVYENQPPPFNRKLPPSMQVSPWVSSSSSSYNIASILYELNVLRTRGPRRMQCIMHSIPISAIQEGGKIQSPTEFTNQGKKKKKPLMDFCSGNLGGESVIKEPLILKNKSPRWHEQLQCWCLNFKGRVTVASVKNFQLVAAAAEAGKNMNIPEEEQDRVILQFGKIGKDIFTMDYRYPISAFQAFAICLSSFDTKPVCE.

Residues 67-122 form the F-box domain; sequence SIWVDLPPELLLDIIQRIESEQSLWPGRRDVVACASVCKSWREMTKEVVKVPELSG.

It belongs to the TUB family. In terms of tissue distribution, ubiquitous, with higher levels in flowers.

The polypeptide is Tubby-like F-box protein 6 (Arabidopsis thaliana (Mouse-ear cress)).